Here is a 456-residue protein sequence, read N- to C-terminus: MTOR-associated protein MEAK7 (456 aa).

Residue glycine 2 is the site of N-myristoyl glycine attachment. The 169-residue stretch at 244–412 folds into the TLDc domain; that stretch reads SILDVLSVMY…FDKMEVWAVG (169 aa).

In terms of assembly, interacts (via C-terminal domain) with MTOR and MLST8; the interaction with MTOR increases upon nutrient stimulation.

It localises to the membrane. It is found in the cytoplasm. Its subcellular location is the lysosome. Its function is as follows. Activates an alternative mTOR signaling through RPS6KB2 activation and EIF4EBP1 repression to regulate cell proliferation and migration. Recruits MTOR at the lysosome, essential for MTOR signaling at the lysosome. This Homo sapiens (Human) protein is MTOR-associated protein MEAK7.